Here is a 511-residue protein sequence, read N- to C-terminus: NAD(P)H-quinone oxidoreductase subunit 2, chloroplastic (511 aa).

Transmembrane regions (helical) follow at residues 15 to 35, 39 to 59, 78 to 98, 108 to 128, 132 to 152, 167 to 187, 210 to 230, 244 to 264, 278 to 298, 306 to 326, 334 to 354, 377 to 397, 410 to 430, and 466 to 486; these read LLPE…DLTF, VLSW…VVLL, SLSI…ILLS, ALTE…LLSG, LIMI…LTGY, LLIG…LYGL, FASW…VAAA, PTPV…ALAT, WHLL…LIAI, MLGY…IAGN, LVYM…IILF, VFCF…AGFF, GFYI…YYYL, and LGIG…NPII.

It belongs to the complex I subunit 2 family. As to quaternary structure, NDH is composed of at least 16 different subunits, 5 of which are encoded in the nucleus.

The protein localises to the plastid. It is found in the chloroplast thylakoid membrane. The enzyme catalyses a plastoquinone + NADH + (n+1) H(+)(in) = a plastoquinol + NAD(+) + n H(+)(out). It carries out the reaction a plastoquinone + NADPH + (n+1) H(+)(in) = a plastoquinol + NADP(+) + n H(+)(out). Functionally, NDH shuttles electrons from NAD(P)H:plastoquinone, via FMN and iron-sulfur (Fe-S) centers, to quinones in the photosynthetic chain and possibly in a chloroplast respiratory chain. The immediate electron acceptor for the enzyme in this species is believed to be plastoquinone. Couples the redox reaction to proton translocation, and thus conserves the redox energy in a proton gradient. In Chlorokybus atmophyticus (Soil alga), this protein is NAD(P)H-quinone oxidoreductase subunit 2, chloroplastic.